Here is a 348-residue protein sequence, read N- to C-terminus: Dihydroorotase (348 aa).

Residues His17 and His19 each coordinate Zn(2+). Substrate-binding positions include 19-21 and Asn45; that span reads HLR. The Zn(2+) site is built by Lys103, His140, and His178. At Lys103 the chain carries N6-carboxylysine. Position 140 (His140) interacts with substrate. Leu223 lines the substrate pocket. Asp251 is a binding site for Zn(2+). Asp251 is a catalytic residue. Substrate-binding residues include His255 and Ala267.

It belongs to the metallo-dependent hydrolases superfamily. DHOase family. Class II DHOase subfamily. In terms of assembly, homodimer. Requires Zn(2+) as cofactor.

It catalyses the reaction (S)-dihydroorotate + H2O = N-carbamoyl-L-aspartate + H(+). The protein operates within pyrimidine metabolism; UMP biosynthesis via de novo pathway; (S)-dihydroorotate from bicarbonate: step 3/3. Catalyzes the reversible cyclization of carbamoyl aspartate to dihydroorotate. This is Dihydroorotase from Yersinia pseudotuberculosis serotype I (strain IP32953).